Here is a 144-residue protein sequence, read N- to C-terminus: MKTFMAKPQEVERKWYIIDAEGKPLGRLASEVASIIRGKNKPIFTPHVDTGDHVIVLNAEKVLLTGKKLDQKLHRYHTLHPGGLKEIKYRHLMEKHPERAIELAVKGMLPKNSLGRQMYRKLKVYRGAEHNHQAQKPEVLDLNI.

The protein belongs to the universal ribosomal protein uL13 family. In terms of assembly, part of the 50S ribosomal subunit.

This protein is one of the early assembly proteins of the 50S ribosomal subunit, although it is not seen to bind rRNA by itself. It is important during the early stages of 50S assembly. In Ruminiclostridium cellulolyticum (strain ATCC 35319 / DSM 5812 / JCM 6584 / H10) (Clostridium cellulolyticum), this protein is Large ribosomal subunit protein uL13.